We begin with the raw amino-acid sequence, 74 residues long: Conotoxin Vc6.8 (74 aa).

Positions 1–19 are cleaved as a signal peptide; the sequence is MEKLTILLLVAAVLMSTQA. The propeptide occupies 20–34; that stretch reads LMQEQRQKAKINLFS. Intrachain disulfides connect cysteine 49–cysteine 62, cysteine 55–cysteine 66, and cysteine 61–cysteine 70.

This sequence belongs to the conotoxin O2 superfamily. Expressed by the venom duct.

The protein localises to the secreted. Inhibits voltage-gated ion channels. The protein is Conotoxin Vc6.8 of Conus victoriae (Queen Victoria cone).